Consider the following 243-residue polypeptide: Large ribosomal subunit protein uL2 (243 aa).

The segment at 198–243 is disordered; sequence VDHPFGGGGRQHPGKPKSVSRDTPPGRKVGDIASKRTGRGGKGGQE. The segment covering 221–231 has biased composition (basic and acidic residues); the sequence is PPGRKVGDIAS.

This sequence belongs to the universal ribosomal protein uL2 family. In terms of assembly, part of the 50S ribosomal subunit. Forms a bridge to the 30S subunit in the 70S ribosome.

Its function is as follows. One of the primary rRNA binding proteins. Required for association of the 30S and 50S subunits to form the 70S ribosome, for tRNA binding and peptide bond formation. It has been suggested to have peptidyltransferase activity; this is somewhat controversial. Makes several contacts with the 16S rRNA in the 70S ribosome. The polypeptide is Large ribosomal subunit protein uL2 (Natronomonas pharaonis (strain ATCC 35678 / DSM 2160 / CIP 103997 / JCM 8858 / NBRC 14720 / NCIMB 2260 / Gabara) (Halobacterium pharaonis)).